The primary structure comprises 89 residues: Small ribosomal subunit protein uS15 (89 aa).

The protein belongs to the universal ribosomal protein uS15 family. As to quaternary structure, part of the 30S ribosomal subunit. Forms a bridge to the 50S subunit in the 70S ribosome, contacting the 23S rRNA.

Its function is as follows. One of the primary rRNA binding proteins, it binds directly to 16S rRNA where it helps nucleate assembly of the platform of the 30S subunit by binding and bridging several RNA helices of the 16S rRNA. Functionally, forms an intersubunit bridge (bridge B4) with the 23S rRNA of the 50S subunit in the ribosome. The polypeptide is Small ribosomal subunit protein uS15 (Rhizobium leguminosarum bv. trifolii (strain WSM2304)).